We begin with the raw amino-acid sequence, 2104 residues long: 5'-3' DNA helicase ZGRF1 (2104 aa).

Positions 335 to 345 (SSPIHSSTVDG) are enriched in polar residues. The interval 335–359 (SSPIHSSTVDGNDTERKPKAQEDDV) is disordered. A Phosphoserine modification is found at S336. A compositionally biased stretch (basic and acidic residues) spans 347 to 356 (DTERKPKAQE). A phosphoserine mark is found at S793 and S864. The Zn(2+) site is built by C1349, H1351, C1374, and C1382. Residues 1349 to 1391 (CHHSQPAKLVMVKKEGPNKGRLFYTCDGPKADRCKFFKWLEDV) form a GRF-type zinc finger. A disordered region spans residues 2085 to 2104 (VEEKQKKKSEKEKSKDKSHS).

Interacts with DNA repair protein RAD51; the interaction promotes RAD51 strand exchange activity. Also interacts with DNA repair proteins EXO1 and BRCA1; the interactions are increased following DNA damage induction.

The protein localises to the nucleus. It catalyses the reaction ATP + H2O = ADP + phosphate + H(+). The catalysed reaction is Couples ATP hydrolysis with the unwinding of duplex DNA at the replication fork by translocating in the 5'-3' direction. This creates two antiparallel DNA single strands (ssDNA). The leading ssDNA polymer is the template for DNA polymerase III holoenzyme which synthesizes a continuous strand.. 5'-3' DNA helicase which is recruited to sites of DNA damage and promotes repair of replication-blocking DNA lesions through stimulation of homologous recombination (HR). Promotes HR by directly stimulating RAD51-mediated strand exchange activity. Not required to load RAD51 at sites of DNA damage but promotes recombinational repair after RAD51 recruitment. Also promotes HR by positively regulating EXO1-mediated DNA end resection of double-strand breaks. Required for recruitment of replication protein RPA2 to DNA damage sites. Promotes the initiation of the G2/M checkpoint but not its maintenance. Catalyzes Holliday junction branch migration and dissociation of D-loops and DNA flaps. This Homo sapiens (Human) protein is 5'-3' DNA helicase ZGRF1 (ZGRF1).